Here is a 74-residue protein sequence, read N- to C-terminus: Small cysteine-rich protein 8 (74 aa).

Residues 1–21 (MAAKFHLCLLLIILGTITVQG) form the signal peptide. A propeptide spanning residues 22-31 (ARHPGKPHFF) is cleaved from the precursor.

Belongs to the Cnidaria small cysteine-rich protein (SCRiP) family. beta subfamily. Contains 4 disulfide bonds.

It is found in the secreted. The protein localises to the nematocyst. Functionally, induces neurotoxic symptoms on zebrafish. Has also been claimed to be implied in calcification, but tests on homolog proteins suggest that proteins of this family have a neurotoxic function and not a calcification function. This is Small cysteine-rich protein 8 from Orbicella faveolata (Mountainous star coral).